The sequence spans 117 residues: uncharacterized protein (117 aa).

The protein to H.influenzae HI_1162 and to HI_0925.

This is an uncharacterized protein from Escherichia coli (strain K12).